The sequence spans 351 residues: MNLAWKEIKFYRFRYTLIMLIIFLLGSMVLFISGLAQGLARENISYLNNMPAEHYIVEDNKEPKLESSQLNQSQQNKIEKIIHENATQMGTQTLKINQQDQDVITLNTPKHLTPKLVSGNYPKKQNEIAISEKLTGNDLKVGDTVTFKGHHHNYKISGIMNESMYSHSSMILMNKEAFKSLNKQVSTFYPVDKINKDNKESLKQIKGIKVVNEKALTDNIASYQAEQMPLNLMIISLFVITAIVLSAFFYVMTIQKIPQIGILKAIGIKTKHLLTALLLQIILTTMVGVILAFSVILILNAFMPVTMPFYLSYSQVLLMIVVFLIVGLIGALLSFIKVLKVDPIEAIGGME.

A run of 4 helical transmembrane segments spans residues 16 to 36, 232 to 252, 278 to 298, and 316 to 336; these read TLIM…SGLA, LMII…FYVM, LLQI…VILI, and VLLM…LSFI.

Belongs to the ABC-4 integral membrane protein family. HrtB subfamily. As to quaternary structure, the complex is composed of two ATP-binding proteins (HrtA), two transmembrane proteins (HrtB) and a solute-binding protein.

It localises to the cell membrane. Functionally, part of the ABC transporter complex hrt involved in hemin import. Responsible for the translocation of the substrate across the membrane. This chain is Putative hemin transport system permease protein HrtB (hrtB), found in Staphylococcus haemolyticus (strain JCSC1435).